Consider the following 465-residue polypeptide: MLWTDCLTRLRQELSDNVFAMWIRPLVAEEVEGILRLYAPNPYWTRYIQENHLELISILAEQLSEGRVRQVEILVDSRPGSILSSSEQPATTTAALQTAPIPQPAKVKREPEPVANTAVSSKSSKKKLLNPQFTFSLFVEGRSNQMAAETCRKVLTQLGASQHNPLFLYGPTGLGKTHLMQAVGNALLQAKPNARVMYMTSESFVQDFVSSLQKGKVEEFKKNCRSLDLLLVDDIHLLAGKEASLVEFFYTFNALLDESKQIILTSDRYPKELTELDPRLVSRFSWGLSVGVEPPDIETRIEILLKKAENSGVDLPRNCALFIAQQVVANVRELEGALNKVVAISRFKGAPIDLDVVRESLKDVLAIRARTISVENIQRVVSEYFRIPLKELVGPKRTRIYARPRQLAMGLARELTGDSFPEIGMAFGGRDHSTVMHACEKVVSLREEDPIFDEDYKNLLRLLQS.

Positions 1-87 are domain I, interacts with DnaA modulators; it reads MLWTDCLTRL…RPGSILSSSE (87 aa). Residues 81–123 are disordered; that stretch reads SILSSSEQPATTTAALQTAPIPQPAKVKREPEPVANTAVSSKS. Residues 88 to 100 are compositionally biased toward low complexity; that stretch reads QPATTTAALQTAP. The segment at 88–127 is domain II; it reads QPATTTAALQTAPIPQPAKVKREPEPVANTAVSSKSSKKK. A domain III, AAA+ region region spans residues 128–345; the sequence is LLNPQFTFSL…GALNKVVAIS (218 aa). 4 residues coordinate ATP: G173, G175, K176, and T177. Residues 346–465 are domain IV, binds dsDNA; sequence RFKGAPIDLD…YKNLLRLLQS (120 aa).

It belongs to the DnaA family. Oligomerizes as a right-handed, spiral filament on DNA at oriC.

Its subcellular location is the cytoplasm. Plays an essential role in the initiation and regulation of chromosomal replication. ATP-DnaA binds to the origin of replication (oriC) to initiate formation of the DNA replication initiation complex once per cell cycle. Binds the DnaA box (a 9 base pair repeat at the origin) and separates the double-stranded (ds)DNA. Forms a right-handed helical filament on oriC DNA; dsDNA binds to the exterior of the filament while single-stranded (ss)DNA is stabiized in the filament's interior. The ATP-DnaA-oriC complex binds and stabilizes one strand of the AT-rich DNA unwinding element (DUE), permitting loading of DNA polymerase. After initiation quickly degrades to an ADP-DnaA complex that is not apt for DNA replication. Binds acidic phospholipids. The protein is Chromosomal replication initiator protein DnaA of Acinetobacter baumannii (strain AB307-0294).